The chain runs to 192 residues: Transmembrane protein 11, mitochondrial (192 aa).

The interval 1–20 is disordered; the sequence is MAAWGRRRLGPGSSGGSARE. The next 2 membrane-spanning stretches (helical) occupy residues 84 to 100 and 107 to 124; these read TAVL…LALP and ISLP…LYGI.

It belongs to the TMEM11 family. As to quaternary structure, associates with the mitochondrial contact site and cristae organizing system (MICOS) complex, composed of at least MICOS10/MIC10, CHCHD3/MIC19, CHCHD6/MIC25, APOOL/MIC27, IMMT/MIC60, APOO/MIC23/MIC26 and QIL1/MIC13. This complex was also known under the names MINOS or MitOS complex. The MICOS complex associates with mitochondrial outer membrane proteins SAMM50, MTX1, MTX2 and DNAJC11, mitochondrial inner membrane protein TMEM11 and with HSPA9. Interacts with IMMT/MIC60.

The protein resides in the mitochondrion inner membrane. Its function is as follows. Plays a role in mitochondrial morphogenesis. The protein is Transmembrane protein 11, mitochondrial (TMEM11) of Homo sapiens (Human).